The primary structure comprises 605 residues: Ankyrin repeat domain-containing protein 13D (605 aa).

ANK repeat units lie at residues 39-68 (RGRT…NVGK) and 72-101 (QGWA…YQRA). The tract at residues 306-333 (AQQHSSHTGAPVQQAASPTNPTAISPEE) is disordered. Residues 319-328 (QAASPTNPTA) show a composition bias toward polar residues. UIM domains are found at residues 482-501 (EDDD…AGTE) and 528-547 (EEQL…STEP). Residues 541–605 (LQLSTEPRGP…RILQLSLTEH (65 aa)) are disordered. The span at 550–563 (PGSPPRTPPAPGPP) shows a compositional bias: pro residues. Ser552 bears the Phosphoserine mark. Position 556 is a phosphothreonine (Thr556). A compositionally biased stretch (low complexity) spans 564–575 (SFEEQLRLALEL). UIM domains are found at residues 564 to 583 (SFEE…QEER) and 589 to 605 (QEEE…LTEH). Positions 576-589 (SSREQEERERRGQQ) are enriched in basic and acidic residues.

Interacts with EGFR (ubiquitinated); the interaction is direct and may regulate EGFR internalization.

The protein localises to the cell membrane. The protein resides in the late endosome. In terms of biological role, ubiquitin-binding protein that specifically recognizes and binds 'Lys-63'-linked ubiquitin. Does not bind 'Lys-48'-linked ubiquitin. Positively regulates the internalization of ligand-activated EGFR by binding to the Ub moiety of ubiquitinated EGFR at the cell membrane. This chain is Ankyrin repeat domain-containing protein 13D (ANKRD13D), found in Homo sapiens (Human).